Consider the following 156-residue polypeptide: 6,7-dimethyl-8-ribityllumazine synthase (156 aa).

5-amino-6-(D-ribitylamino)uracil is bound by residues F22, 57–59 (AYE), and 81–83 (TVI). Residue 86-87 (GT) participates in (2S)-2-hydroxy-3-oxobutyl phosphate binding. The active-site Proton donor is the H89. F114 is a 5-amino-6-(D-ribitylamino)uracil binding site. R128 provides a ligand contact to (2S)-2-hydroxy-3-oxobutyl phosphate.

It belongs to the DMRL synthase family. As to quaternary structure, forms an icosahedral capsid composed of 60 subunits, arranged as a dodecamer of pentamers.

It carries out the reaction (2S)-2-hydroxy-3-oxobutyl phosphate + 5-amino-6-(D-ribitylamino)uracil = 6,7-dimethyl-8-(1-D-ribityl)lumazine + phosphate + 2 H2O + H(+). It functions in the pathway cofactor biosynthesis; riboflavin biosynthesis; riboflavin from 2-hydroxy-3-oxobutyl phosphate and 5-amino-6-(D-ribitylamino)uracil: step 1/2. Its function is as follows. Catalyzes the formation of 6,7-dimethyl-8-ribityllumazine by condensation of 5-amino-6-(D-ribitylamino)uracil with 3,4-dihydroxy-2-butanone 4-phosphate. This is the penultimate step in the biosynthesis of riboflavin. This is 6,7-dimethyl-8-ribityllumazine synthase from Erwinia tasmaniensis (strain DSM 17950 / CFBP 7177 / CIP 109463 / NCPPB 4357 / Et1/99).